We begin with the raw amino-acid sequence, 430 residues long: Glutamate-1-semialdehyde 2,1-aminomutase (430 aa).

N6-(pyridoxal phosphate)lysine is present on Lys265.

It belongs to the class-III pyridoxal-phosphate-dependent aminotransferase family. HemL subfamily. In terms of assembly, homodimer. It depends on pyridoxal 5'-phosphate as a cofactor.

It localises to the cytoplasm. The catalysed reaction is (S)-4-amino-5-oxopentanoate = 5-aminolevulinate. It participates in porphyrin-containing compound metabolism; protoporphyrin-IX biosynthesis; 5-aminolevulinate from L-glutamyl-tRNA(Glu): step 2/2. This Shewanella sp. (strain MR-4) protein is Glutamate-1-semialdehyde 2,1-aminomutase.